The primary structure comprises 331 residues: Mitochondrial carrier protein CoAc1 (331 aa).

Transmembrane regions (helical) follow at residues 16–36 (LVDTLPVLAKTLIAGGAAGAI), 79–99 (FYKGNGASVIRIIPYAALHYM), 123–143 (LVAGSAAGGTAVLCTYPLDLA), 193–213 (GIGPTLIGILPYAGLKFYIYE), 231–251 (LPCGALAGLFGQTITYPLDVV), and 292–312 (FAGLSINYIKIVPSVAIGFTV). Solcar repeat units follow at residues 21-107 (PVLA…YRDW), 117-218 (SGPI…LKRH), and 225-319 (NSVR…MKSW).

This sequence belongs to the mitochondrial carrier (TC 2.A.29) family. Expressed throughout the plant.

The protein localises to the mitochondrion inner membrane. Required for the accumulation of coenzyme A in the mitochondrial matrix. In Arabidopsis thaliana (Mouse-ear cress), this protein is Mitochondrial carrier protein CoAc1.